The following is a 199-amino-acid chain: CASP-like protein 1D2 (199 aa).

Residues 1–27 (MASTENPDPETGKSEPIPASATPPPSS) form a disordered region. An N-acetylalanine modification is found at Ala-2. Residues 2–36 (ASTENPDPETGKSEPIPASATPPPSSAASFLDCRK) are Cytoplasmic-facing. A helical transmembrane segment spans residues 37–57 (IDIITRVLLFSATLTALIVMV). The Extracellular portion of the chain corresponds to 58 to 85 (TSDQTEMTQLPGVSSPAPVSAEFNDSPA). Residues 86–106 (FIYFVVALVVASFYALISTLV) traverse the membrane as a helical segment. Topologically, residues 107–129 (SISLLLKPEFTAQFSIYLASLDM) are cytoplasmic. The helical transmembrane segment at 130-150 (VMLGILASATGTAGGVAYIAL) threads the bilayer. Residues 151–171 (KGNEEVGWNKICNVYDKFCRY) are Extracellular-facing. Residues 172–192 (IATSLALSLFASLLLLVLSIW) traverse the membrane as a helical segment. The Cytoplasmic portion of the chain corresponds to 193-199 (SALSKRT).

It belongs to the Casparian strip membrane proteins (CASP) family. Homodimer and heterodimers. As to expression, expressed in the root endodermis and flowers.

Its subcellular location is the cell membrane. This chain is CASP-like protein 1D2, found in Arabidopsis thaliana (Mouse-ear cress).